The following is a 123-amino-acid chain: Large ribosomal subunit protein bL12 (123 aa).

The protein belongs to the bacterial ribosomal protein bL12 family. As to quaternary structure, homodimer. Part of the ribosomal stalk of the 50S ribosomal subunit. Forms a multimeric L10(L12)X complex, where L10 forms an elongated spine to which 2 to 4 L12 dimers bind in a sequential fashion. Binds GTP-bound translation factors.

Functionally, forms part of the ribosomal stalk which helps the ribosome interact with GTP-bound translation factors. Is thus essential for accurate translation. In Shewanella amazonensis (strain ATCC BAA-1098 / SB2B), this protein is Large ribosomal subunit protein bL12.